The sequence spans 1419 residues: Formin-1 (1419 aa).

A microtubule-binding region spans residues Met-1–Pro-622. Disordered stretches follow at residues Asp-138 to Asp-194, Leu-262 to Ala-331, Val-343 to Asp-641, and Ser-685 to Glu-711. Residues Arg-151–Ser-163 are compositionally biased toward basic residues. A compositionally biased stretch (basic and acidic residues) spans Ser-298 to Ala-317. Polar residues predominate over residues Arg-394–Ala-411. Over residues Ile-425–Arg-438 the composition is skewed to basic and acidic residues. Residues Asn-456–Ser-842 are mediates interaction with alpha-catenin. The segment covering Phe-504–Thr-517 has biased composition (polar residues). Residues Val-520–Pro-529 show a composition bias toward pro residues. A compositionally biased stretch (polar residues) spans Ala-614–Gly-623. A compositionally biased stretch (basic and acidic residues) spans Ser-685–Pro-694. The stretch at Ala-720 to Glu-774 forms a coiled coil. Disordered regions lie at residues Gly-859–Pro-978 and Ser-1390–Asn-1419. Composition is skewed to pro residues over residues Leu-868–Pro-882 and Pro-890–Gly-958. The 88-residue stretch at Pro-870–Pro-957 folds into the FH1 domain. The FH2 domain maps to Arg-972 to Leu-1388.

Belongs to the formin homology family. Cappuccino subfamily. As to quaternary structure, interacts with alpha-catenin and may interact with tubulin. Post-translationally, phosphorylated on serine and possibly threonine residues.

It localises to the nucleus. It is found in the cytoplasm. The protein localises to the cell junction. The protein resides in the adherens junction. Its subcellular location is the cell membrane. Plays a role in the formation of adherens junction and the polymerization of linear actin cables. In Homo sapiens (Human), this protein is Formin-1 (FMN1).